A 403-amino-acid polypeptide reads, in one-letter code: Alkaline protease 1 (403 aa).

Residues 1–21 form the signal peptide; sequence MLSIKRTLLLLGAVLPAVFGA. Residues 22-125 constitute a propeptide that is removed on maturation; sequence PVQETRRAAQ…QIWYIDALTT (104 aa). The region spanning 36–120 is the Inhibitor I9 domain; sequence KYIVTFKPGT…HVEEDQIWYI (85 aa). Residues 130–403 form the Peptidase S8 domain; it reads PWGLGSISHK…PNKLAYNGNA (274 aa). Catalysis depends on charge relay system residues aspartate 162 and histidine 193. N-linked (GlcNAc...) asparagine glycans are attached at residues asparagine 253 and asparagine 307. Serine 349 serves as the catalytic Charge relay system.

This sequence belongs to the peptidase S8 family.

Its subcellular location is the secreted. The catalysed reaction is Hydrolysis of proteins with broad specificity, and of Bz-Arg-OEt &gt; Ac-Tyr-OEt. Does not hydrolyze peptide amides.. Functionally, secreted alkaline protease that allows assimilation of proteinaceous substrates. In Neosartorya fischeri (strain ATCC 1020 / DSM 3700 / CBS 544.65 / FGSC A1164 / JCM 1740 / NRRL 181 / WB 181) (Aspergillus fischerianus), this protein is Alkaline protease 1 (alp1).